The following is a 329-amino-acid chain: Probable cell division protein WhiA (329 aa).

The H-T-H motif DNA-binding region spans 276-309 (SLEELGKVHEPPLTKDAIAGRIRRLLALADKTAR). The disordered stretch occupies residues 308–329 (ARSNGEPTTLESLPVEMRDDRG). Residues 309–318 (RSNGEPTTLE) are compositionally biased toward polar residues.

This sequence belongs to the WhiA family.

Involved in cell division and chromosome segregation. The chain is Probable cell division protein WhiA from Cutibacterium acnes (strain DSM 16379 / KPA171202) (Propionibacterium acnes).